A 339-amino-acid polypeptide reads, in one-letter code: DNA-directed RNA polymerase subunit alpha (339 aa).

Positions 1–233 (MVREKVRIST…DLFIPFLHAE (233 aa)) are alpha N-terminal domain (alpha-NTD). The tract at residues 267–339 (IALKSIFIDQ…FTINLPKNKF (73 aa)) is alpha C-terminal domain (alpha-CTD).

The protein belongs to the RNA polymerase alpha chain family. In plastids the minimal PEP RNA polymerase catalytic core is composed of four subunits: alpha, beta, beta', and beta''. When a (nuclear-encoded) sigma factor is associated with the core the holoenzyme is formed, which can initiate transcription.

The protein resides in the plastid. Its subcellular location is the chloroplast. The enzyme catalyses RNA(n) + a ribonucleoside 5'-triphosphate = RNA(n+1) + diphosphate. DNA-dependent RNA polymerase catalyzes the transcription of DNA into RNA using the four ribonucleoside triphosphates as substrates. This Populus trichocarpa (Western balsam poplar) protein is DNA-directed RNA polymerase subunit alpha.